Reading from the N-terminus, the 458-residue chain is ATP synthase subunit beta (458 aa).

Residue 148–155 (GGAGVGKT) participates in ATP binding.

It belongs to the ATPase alpha/beta chains family. In terms of assembly, F-type ATPases have 2 components, CF(1) - the catalytic core - and CF(0) - the membrane proton channel. CF(1) has five subunits: alpha(3), beta(3), gamma(1), delta(1), epsilon(1). CF(0) has three main subunits: a(1), b(2) and c(9-12). The alpha and beta chains form an alternating ring which encloses part of the gamma chain. CF(1) is attached to CF(0) by a central stalk formed by the gamma and epsilon chains, while a peripheral stalk is formed by the delta and b chains.

The protein localises to the cell inner membrane. It catalyses the reaction ATP + H2O + 4 H(+)(in) = ADP + phosphate + 5 H(+)(out). Its function is as follows. Produces ATP from ADP in the presence of a proton gradient across the membrane. The catalytic sites are hosted primarily by the beta subunits. The sequence is that of ATP synthase subunit beta from Francisella tularensis subsp. mediasiatica (strain FSC147).